We begin with the raw amino-acid sequence, 79 residues long: Tungsten-containing formylmethanofuran dehydrogenase 2 subunit G (79 aa).

2 consecutive 4Fe-4S ferredoxin-type domains span residues 2 to 31 and 51 to 79; these read VKIV…SPNV and TVSV…EIKT. [4Fe-4S] cluster-binding residues include Cys11, Cys14, Cys17, Cys21, Cys60, Cys63, Cys66, and Cys70.

[4Fe-4S] cluster serves as cofactor.

The catalysed reaction is N-formylmethanofuran + 2 oxidized [2Fe-2S]-[ferredoxin] + H2O = methanofuran + 2 reduced [2Fe-2S]-[ferredoxin] + CO2 + H(+). It participates in one-carbon metabolism; methanogenesis from CO(2); 5,10-methenyl-5,6,7,8-tetrahydromethanopterin from CO(2): step 1/3. Not inactivated by cyanide. Its function is as follows. Catalyzes the reversible oxidation of CO(2) and methanofuran (MFR) to N-formylmethanofuran (CHO-MFR). This enzyme is oxygen-labile. May function as an electron transfer protein. This is Tungsten-containing formylmethanofuran dehydrogenase 2 subunit G (fwdG) from Methanopyrus kandleri (strain AV19 / DSM 6324 / JCM 9639 / NBRC 100938).